Here is a 194-residue protein sequence, read N- to C-terminus: 7-methyl-GTP pyrophosphatase (194 aa).

The Proton acceptor role is filled by D69.

The protein belongs to the Maf family. YceF subfamily. Requires a divalent metal cation as cofactor.

It localises to the cytoplasm. It carries out the reaction N(7)-methyl-GTP + H2O = N(7)-methyl-GMP + diphosphate + H(+). Its function is as follows. Nucleoside triphosphate pyrophosphatase that hydrolyzes 7-methyl-GTP (m(7)GTP). May have a dual role in cell division arrest and in preventing the incorporation of modified nucleotides into cellular nucleic acids. In Sodalis glossinidius (strain morsitans), this protein is 7-methyl-GTP pyrophosphatase.